The chain runs to 356 residues: S-adenosylmethionine:tRNA ribosyltransferase-isomerase (356 aa).

It belongs to the QueA family. As to quaternary structure, monomer.

The protein localises to the cytoplasm. The enzyme catalyses 7-aminomethyl-7-carbaguanosine(34) in tRNA + S-adenosyl-L-methionine = epoxyqueuosine(34) in tRNA + adenine + L-methionine + 2 H(+). It participates in tRNA modification; tRNA-queuosine biosynthesis. Functionally, transfers and isomerizes the ribose moiety from AdoMet to the 7-aminomethyl group of 7-deazaguanine (preQ1-tRNA) to give epoxyqueuosine (oQ-tRNA). In Shigella dysenteriae serotype 1 (strain Sd197), this protein is S-adenosylmethionine:tRNA ribosyltransferase-isomerase.